Consider the following 264-residue polypeptide: 3-methyl-2-oxobutanoate hydroxymethyltransferase (264 aa).

D45 and D84 together coordinate Mg(2+). Residues 45 to 46 (DS), D84, and K112 contribute to the 3-methyl-2-oxobutanoate site. Residue E114 participates in Mg(2+) binding. E181 (proton acceptor) is an active-site residue.

It belongs to the PanB family. In terms of assembly, homodecamer; pentamer of dimers. It depends on Mg(2+) as a cofactor.

The protein resides in the cytoplasm. The enzyme catalyses 3-methyl-2-oxobutanoate + (6R)-5,10-methylene-5,6,7,8-tetrahydrofolate + H2O = 2-dehydropantoate + (6S)-5,6,7,8-tetrahydrofolate. It functions in the pathway cofactor biosynthesis; (R)-pantothenate biosynthesis; (R)-pantoate from 3-methyl-2-oxobutanoate: step 1/2. In terms of biological role, catalyzes the reversible reaction in which hydroxymethyl group from 5,10-methylenetetrahydrofolate is transferred onto alpha-ketoisovalerate to form ketopantoate. The chain is 3-methyl-2-oxobutanoate hydroxymethyltransferase from Shigella boydii serotype 18 (strain CDC 3083-94 / BS512).